The chain runs to 298 residues: Protoheme IX farnesyltransferase (298 aa).

A run of 8 helical transmembrane segments spans residues 23–43, 49–69, 95–115, 117–137, 144–164, 171–191, 234–254, and 276–296; these read VTQLAVFCAVIGMFLAVPGLP, LFGTIGIWLLAAAAFAINCLI, VLSLSGLLGGAGMLVLYHLVN, LTMWLTFATFVGYAVIYTVIL, NIVIGGLSGAMPPALGWASVA, AWVLVLIIFIWTPPHFWALAL, FMHMNGLLYLLAAVILGGIFV, and SILYLALLFGALLVDHWVGVL.

The protein belongs to the UbiA prenyltransferase family. Protoheme IX farnesyltransferase subfamily.

It localises to the cell inner membrane. The catalysed reaction is heme b + (2E,6E)-farnesyl diphosphate + H2O = Fe(II)-heme o + diphosphate. The protein operates within porphyrin-containing compound metabolism; heme O biosynthesis; heme O from protoheme: step 1/1. In terms of biological role, converts heme B (protoheme IX) to heme O by substitution of the vinyl group on carbon 2 of heme B porphyrin ring with a hydroxyethyl farnesyl side group. The chain is Protoheme IX farnesyltransferase from Bordetella avium (strain 197N).